A 331-amino-acid chain; its full sequence is Thiamine thiazole synthase (331 aa).

Substrate is bound by residues Ser-82, 103–104 (EA), Gly-111, and Val-176. The residue at position 210 (Cys-210) is a 2,3-didehydroalanine (Cys). Residues Asp-212, His-242, Met-296, and 306-308 (RMG) contribute to the substrate site.

Belongs to the THI4 family. As to quaternary structure, homooctamer. Fe cation is required as a cofactor. During the catalytic reaction, a sulfide is transferred from Cys-210 to a reaction intermediate, generating a dehydroalanine residue.

It is found in the cytoplasm. The protein resides in the nucleus. It catalyses the reaction [ADP-thiazole synthase]-L-cysteine + glycine + NAD(+) = [ADP-thiazole synthase]-dehydroalanine + ADP-5-ethyl-4-methylthiazole-2-carboxylate + nicotinamide + 3 H2O + 2 H(+). Involved in biosynthesis of the thiamine precursor thiazole. Catalyzes the conversion of NAD and glycine to adenosine diphosphate 5-(2-hydroxyethyl)-4-methylthiazole-2-carboxylic acid (ADT), an adenylated thiazole intermediate. The reaction includes an iron-dependent sulfide transfer from a conserved cysteine residue of the protein to a thiazole intermediate. The enzyme can only undergo a single turnover, which suggests it is a suicide enzyme. May have additional roles in adaptation to various stress conditions and in DNA damage tolerance. The polypeptide is Thiamine thiazole synthase (Eremothecium gossypii (strain ATCC 10895 / CBS 109.51 / FGSC 9923 / NRRL Y-1056) (Yeast)).